The following is a 117-amino-acid chain: Basic phospholipase A2 pseudexin A chain (117 aa).

Cystine bridges form between C11–C71, C27–C117, C29–C45, C44–C98, C51–C91, C60–C84, and C78–C89. 3 residues coordinate Ca(2+): Y28, G30, and G32. H48 is an active-site residue. D49 is a binding site for Ca(2+). The active site involves D92.

The protein belongs to the phospholipase A2 family. Group I subfamily. D49 sub-subfamily. Ca(2+) is required as a cofactor. In terms of tissue distribution, expressed by the venom gland.

It localises to the secreted. The catalysed reaction is a 1,2-diacyl-sn-glycero-3-phosphocholine + H2O = a 1-acyl-sn-glycero-3-phosphocholine + a fatty acid + H(+). In terms of biological role, PLA2 catalyzes the calcium-dependent hydrolysis of the 2-acyl groups in 3-sn-phosphoglycerides. This is Basic phospholipase A2 pseudexin A chain from Pseudechis porphyriacus (Red-bellied black snake).